A 130-amino-acid chain; its full sequence is Small ribosomal subunit protein uS9 (130 aa).

The interval 107–130 (DSRKVERKKPGLKKARKASQFSKR) is disordered. The span at 111 to 130 (VERKKPGLKKARKASQFSKR) shows a compositional bias: basic residues.

The protein belongs to the universal ribosomal protein uS9 family.

The polypeptide is Small ribosomal subunit protein uS9 (Streptococcus sanguinis (strain SK36)).